Consider the following 450-residue polypeptide: tRNA-aminoacylation cofactor arc1 (450 aa).

A disordered region spans residues 208-278 (QRPSVIKKDK…KEPPKAATPV (71 aa)). Composition is skewed to basic and acidic residues over residues 213–225 (IKKD…EGKP) and 233–247 (SVEK…AKKE). The span at 248–261 (KQNKKEKKDKKDKK) shows a compositional bias: basic residues. Positions 262 to 272 (DKKEKAPKEPP) are enriched in basic and acidic residues. One can recognise a tRNA-binding domain in the interval 278 to 382 (VPSMIDFRIG…ENAEIGDRLT (105 aa)).

The protein belongs to the tRNA-aminoacylation cofactor ARC1 family. Component of a yeast aminoacyl-tRNA synthase (aaRS) complex formed by methionyl-tRNA synthase, glutamyl-tRNA synthase and the tRNA aminoacylation cofactor arc1 in a stoichiometric complex. Interacts with rar1/mes1 and gus1.

It is found in the cytoplasm. Functionally, binds to tRNA and functions as a cofactor for the methionyl-tRNA synthetase (MetRS) and glutamyl-tRNA synthetase (GluRS). Forms a complex with MetRS and GluRS and increases their affinity for cognate tRNAs due to the presence of a tRNA binding domain in its middle and C-terminal part. The sequence is that of tRNA-aminoacylation cofactor arc1 from Schizosaccharomyces pombe (strain 972 / ATCC 24843) (Fission yeast).